The chain runs to 418 residues: Histidine--tRNA ligase (418 aa).

Belongs to the class-II aminoacyl-tRNA synthetase family.

The protein resides in the cytoplasm. It catalyses the reaction tRNA(His) + L-histidine + ATP = L-histidyl-tRNA(His) + AMP + diphosphate + H(+). This is Histidine--tRNA ligase from Methanococcus aeolicus (strain ATCC BAA-1280 / DSM 17508 / OCM 812 / Nankai-3).